Reading from the N-terminus, the 214-residue chain is Protein-L-isoaspartate O-methyltransferase 1 (214 aa).

The active site involves serine 62.

The protein belongs to the methyltransferase superfamily. L-isoaspartyl/D-aspartyl protein methyltransferase family.

The protein resides in the cytoplasm. The catalysed reaction is [protein]-L-isoaspartate + S-adenosyl-L-methionine = [protein]-L-isoaspartate alpha-methyl ester + S-adenosyl-L-homocysteine. In terms of biological role, catalyzes the methyl esterification of L-isoaspartyl residues in peptides and proteins that result from spontaneous decomposition of normal L-aspartyl and L-asparaginyl residues. It plays a role in the repair and/or degradation of damaged proteins. In Syntrophobacter fumaroxidans (strain DSM 10017 / MPOB), this protein is Protein-L-isoaspartate O-methyltransferase 1.